The following is a 213-amino-acid chain: MSIGILGTKLGMTQIFDQESGISIPVTVVQAGPCPVTQVKTQDTDGYNAIQVGFLPVKEKALSKPELGHLKKSNTDPMRHLKEYRLTDAPNLQPGDAVTADIFQAGDLVDVAGQSMGRGFAGYQKRHNFRRGNMTHGSKNHRLPGSTGAGTTPGRVYPGKRMAGQYGASQVTVRRLTVVRVDAERNLLIIKGALPGKPGTLLNITPAKTVGRG.

The interval 135–155 (THGSKNHRLPGSTGAGTTPGR) is disordered.

This sequence belongs to the universal ribosomal protein uL3 family. As to quaternary structure, part of the 50S ribosomal subunit. Forms a cluster with proteins L14 and L19.

In terms of biological role, one of the primary rRNA binding proteins, it binds directly near the 3'-end of the 23S rRNA, where it nucleates assembly of the 50S subunit. The chain is Large ribosomal subunit protein uL3 from Synechocystis sp. (strain ATCC 27184 / PCC 6803 / Kazusa).